The sequence spans 341 residues: Tetraacyldisaccharide 4'-kinase (341 aa).

Position 54-61 (54-61 (TVGGTGKT)) interacts with ATP.

Belongs to the LpxK family.

The enzyme catalyses a lipid A disaccharide + ATP = a lipid IVA + ADP + H(+). Its pathway is glycolipid biosynthesis; lipid IV(A) biosynthesis; lipid IV(A) from (3R)-3-hydroxytetradecanoyl-[acyl-carrier-protein] and UDP-N-acetyl-alpha-D-glucosamine: step 6/6. Transfers the gamma-phosphate of ATP to the 4'-position of a tetraacyldisaccharide 1-phosphate intermediate (termed DS-1-P) to form tetraacyldisaccharide 1,4'-bis-phosphate (lipid IVA). This chain is Tetraacyldisaccharide 4'-kinase, found in Mesorhizobium japonicum (strain LMG 29417 / CECT 9101 / MAFF 303099) (Mesorhizobium loti (strain MAFF 303099)).